Reading from the N-terminus, the 324-residue chain is S-methyl-5'-thioadenosine phosphorylase (324 aa).

Phosphate contacts are provided by residues S14, 57–58, and 90–91; these read RH and SA. M196 contacts substrate. Phosphate is bound at residue S197. 220–222 lines the substrate pocket; the sequence is DYD.

Belongs to the PNP/MTAP phosphorylase family. MTAP subfamily. As to quaternary structure, homotrimer.

It localises to the cytoplasm. It is found in the nucleus. The catalysed reaction is S-methyl-5'-thioadenosine + phosphate = 5-(methylsulfanyl)-alpha-D-ribose 1-phosphate + adenine. It participates in amino-acid biosynthesis; L-methionine biosynthesis via salvage pathway; S-methyl-5-thio-alpha-D-ribose 1-phosphate from S-methyl-5'-thioadenosine (phosphorylase route): step 1/1. In terms of biological role, catalyzes the reversible phosphorylation of S-methyl-5'-thioadenosine (MTA) to adenine and 5-methylthioribose-1-phosphate. Involved in the breakdown of MTA, a major by-product of polyamine biosynthesis. Responsible for the first step in the methionine salvage pathway after MTA has been generated from S-adenosylmethionine. Has broad substrate specificity with 6-aminopurine nucleosides as preferred substrates. The chain is S-methyl-5'-thioadenosine phosphorylase from Coprinopsis cinerea (strain Okayama-7 / 130 / ATCC MYA-4618 / FGSC 9003) (Inky cap fungus).